The sequence spans 278 residues: Phosphate import ATP-binding protein PstB (278 aa).

The ABC transporter domain occupies 32 to 273; that stretch reads YETRDLNLWY…PSDKRTEDYI (242 aa). 64-71 serves as a coordination point for ATP; that stretch reads GPSGCGKS.

It belongs to the ABC transporter superfamily. Phosphate importer (TC 3.A.1.7) family. In terms of assembly, the complex is composed of two ATP-binding proteins (PstB), two transmembrane proteins (PstC and PstA) and a solute-binding protein (PstS).

It is found in the cell membrane. The enzyme catalyses phosphate(out) + ATP + H2O = ADP + 2 phosphate(in) + H(+). Functionally, part of the ABC transporter complex PstSACB involved in phosphate import. Responsible for energy coupling to the transport system. The chain is Phosphate import ATP-binding protein PstB from Halalkalibacterium halodurans (strain ATCC BAA-125 / DSM 18197 / FERM 7344 / JCM 9153 / C-125) (Bacillus halodurans).